A 190-amino-acid polypeptide reads, in one-letter code: Potassium-transporting ATPase KdpC subunit (190 aa).

The helical transmembrane segment at 13–33 (IGFLLLTLVCGVLYPGVVTVF) threads the bilayer.

It belongs to the KdpC family. As to quaternary structure, the system is composed of three essential subunits: KdpA, KdpB and KdpC.

It is found in the cell membrane. Part of the high-affinity ATP-driven potassium transport (or Kdp) system, which catalyzes the hydrolysis of ATP coupled with the electrogenic transport of potassium into the cytoplasm. This subunit acts as a catalytic chaperone that increases the ATP-binding affinity of the ATP-hydrolyzing subunit KdpB by the formation of a transient KdpB/KdpC/ATP ternary complex. The chain is Potassium-transporting ATPase KdpC subunit from Listeria monocytogenes serovar 1/2a (strain ATCC BAA-679 / EGD-e).